The sequence spans 391 residues: Formate-dependent phosphoribosylglycinamide formyltransferase (391 aa).

N(1)-(5-phospho-beta-D-ribosyl)glycinamide-binding positions include 18-19 and glutamate 78; that span reads EL. ATP is bound by residues arginine 110, lysine 151, 156–161, 191–194, and glutamate 199; these read SSGKGQ and EEFI. Residues 115–305 enclose the ATP-grasp domain; that stretch reads ELVSRDLKIK…EFELHLRAFL (191 aa). Mg(2+) contacts are provided by glutamate 264 and glutamate 276. Residues aspartate 283, lysine 353, and 360–361 contribute to the N(1)-(5-phospho-beta-D-ribosyl)glycinamide site; that span reads RR.

It belongs to the PurK/PurT family. Homodimer.

It catalyses the reaction N(1)-(5-phospho-beta-D-ribosyl)glycinamide + formate + ATP = N(2)-formyl-N(1)-(5-phospho-beta-D-ribosyl)glycinamide + ADP + phosphate + H(+). It participates in purine metabolism; IMP biosynthesis via de novo pathway; N(2)-formyl-N(1)-(5-phospho-D-ribosyl)glycinamide from N(1)-(5-phospho-D-ribosyl)glycinamide (formate route): step 1/1. Involved in the de novo purine biosynthesis. Catalyzes the transfer of formate to 5-phospho-ribosyl-glycinamide (GAR), producing 5-phospho-ribosyl-N-formylglycinamide (FGAR). Formate is provided by PurU via hydrolysis of 10-formyl-tetrahydrofolate. The sequence is that of Formate-dependent phosphoribosylglycinamide formyltransferase from Prochlorococcus marinus (strain MIT 9312).